The following is a 142-amino-acid chain: Small ribosomal subunit protein uS12 (142 aa).

Belongs to the universal ribosomal protein uS12 family. As to quaternary structure, part of the 30S ribosomal subunit.

In terms of biological role, with S4 and S5 plays an important role in translational accuracy. Located at the interface of the 30S and 50S subunits. The chain is Small ribosomal subunit protein uS12 from Methanoculleus marisnigri (strain ATCC 35101 / DSM 1498 / JR1).